The chain runs to 801 residues: Phenylalanine--tRNA ligase beta subunit (801 aa).

One can recognise a tRNA-binding domain in the interval 39–148; that stretch reads AGSFTGVKVG…EDAVIGTDFR (110 aa). The 76-residue stretch at 401–476 folds into the B5 domain; the sequence is PKPNKVALRR…RIYGYDNIPN (76 aa). The Mg(2+) site is built by aspartate 454, aspartate 460, glutamate 463, and glutamate 464. The FDX-ACB domain occupies 707–800; that stretch reads SKFPSNRRDI…VSEKFGAALR (94 aa).

The protein belongs to the phenylalanyl-tRNA synthetase beta subunit family. Type 1 subfamily. As to quaternary structure, tetramer of two alpha and two beta subunits. Requires Mg(2+) as cofactor.

The protein localises to the cytoplasm. The enzyme catalyses tRNA(Phe) + L-phenylalanine + ATP = L-phenylalanyl-tRNA(Phe) + AMP + diphosphate + H(+). This chain is Phenylalanine--tRNA ligase beta subunit, found in Vibrio parahaemolyticus serotype O3:K6 (strain RIMD 2210633).